The chain runs to 88 residues: Small ribosomal subunit protein uS17 (88 aa).

This sequence belongs to the universal ribosomal protein uS17 family. Part of the 30S ribosomal subunit.

Its function is as follows. One of the primary rRNA binding proteins, it binds specifically to the 5'-end of 16S ribosomal RNA. In Helicobacter hepaticus (strain ATCC 51449 / 3B1), this protein is Small ribosomal subunit protein uS17.